Here is a 536-residue protein sequence, read N- to C-terminus: Velvet complex subunit B (536 aa).

The segment covering 1–26 has biased composition (polar residues); that stretch reads MIQRTTDPAAGSSTSGPPTNSLSWGS. Disordered stretches follow at residues 1–27, 106–143, 157–409, and 508–536; these read MIQRTTDPAAGSSTSGPPTNSLSWGSR, PNAAQDRGPPMPAKPRRPTNPPPPSNTHGSPPAPAIPF, SAPA…RTLV, and KLPLRNRHGSGSKRRRRGAGGGSDDEESD. One can recognise a Velvet domain in the interval 25-512; that stretch reads GSRHNGKLYT…NQQNMKLPLR (488 aa). A compositionally biased stretch (pro residues) spans 114-143; sequence PPMPAKPRRPTNPPPPSNTHGSPPAPAIPF. Low complexity-rich tracts occupy residues 158–170 and 190–265; these read APASDRSPSSASA and PYGP…YPPY. Polar residues predominate over residues 280 to 305; it reads TSNFDHSQPVTSSVDQETNSPVVTTT. The segment covering 306–315 has biased composition (basic and acidic residues); sequence ARDDDQREGE. The span at 328–342 shows a compositional bias: low complexity; sequence PSNSGAPSTSPTAST. The segment covering 356–399 has biased composition (basic and acidic residues); the sequence is EEREGPDGGPDLREPIEPGSTKAREEEDARTGTEKGDPKDKSDA. Over residues 400–409 the composition is skewed to polar residues; that stretch reads QRATYTRTLV. The span at 511–525 shows a compositional bias: basic residues; that stretch reads LRNRHGSGSKRRRRG.

Belongs to the velvet family. VelB subfamily. In terms of assembly, component of the heterotrimeric velvet complex composed of laeA, veA and velB; VeA acting as a bridging protein between laeA and velB. Forms a heterodimeric complex with vosA; the formation of the velB-vosA complex is light-dependent.

The protein resides in the nucleus. Its subcellular location is the cytoplasm. Its function is as follows. Component of the velvet transcription factor complex that controls sexual/asexual developmental ratio in response to light, promoting sexual development in the darkness while stimulating asexual sporulation under illumination. The velvet complex acts as a global regulator for secondary metabolite gene expression. Component of the velB-VosA heterodimeric complex that plays a dual role in activating genes associated with spore maturation and repressing certain development-associated genes. The velB-VosA complex binds DNA through the DNA-binding domain of vosA that recognizes an 11-nucleotide consensus sequence 5'-CTGGCCGCGGC-3' consisting of two motifs in the promoters of key developmental regulatory genes. The chain is Velvet complex subunit B from Schizophyllum commune (strain H4-8 / FGSC 9210) (Split gill fungus).